A 444-amino-acid chain; its full sequence is ATP-dependent protease ATPase subunit HslU (444 aa).

Residues isoleucine 18 and 60 to 65 (GVGKTE) contribute to the ATP site. Positions 141–161 (DAWGNNEEGNNDSGTRQSFRK) are disordered. Positions 147–157 (EEGNNDSGTRQ) are enriched in polar residues. Residues aspartate 257, glutamate 322, and arginine 394 each contribute to the ATP site.

Belongs to the ClpX chaperone family. HslU subfamily. A double ring-shaped homohexamer of HslV is capped on each side by a ring-shaped HslU homohexamer. The assembly of the HslU/HslV complex is dependent on binding of ATP.

The protein resides in the cytoplasm. ATPase subunit of a proteasome-like degradation complex; this subunit has chaperone activity. The binding of ATP and its subsequent hydrolysis by HslU are essential for unfolding of protein substrates subsequently hydrolyzed by HslV. HslU recognizes the N-terminal part of its protein substrates and unfolds these before they are guided to HslV for hydrolysis. The sequence is that of ATP-dependent protease ATPase subunit HslU from Aliivibrio fischeri (strain ATCC 700601 / ES114) (Vibrio fischeri).